We begin with the raw amino-acid sequence, 479 residues long: Monodictyphenone cluster transcriptional coactivator mdpA (479 aa).

One can recognise an HTH iclR-type domain in the interval 77–147 (LAVQNQLLAC…DPGQVAHSAL (71 aa)). Residues 107-126 (IKDVAELAGVPETHLSRIIR) constitute a DNA-binding region (H-T-H motif). 2 disordered regions span residues 281–305 (GPTAWSPAHPNPIRPPTPGGSHKHD) and 314–333 (TASTTPASSHNHTHTHTTNS). The segment covering 289-298 (HPNPIRPPTP) has biased composition (pro residues). Residues 314–323 (TASTTPASSH) are compositionally biased toward low complexity.

It localises to the nucleus. In terms of biological role, transcriptional coactivator; part of the gene cluster that mediates the biosynthesis of monodictyphenone, a prenyl xanthone derivative. With mdpE, coregulates the production of monodictyphenone. The polypeptide is Monodictyphenone cluster transcriptional coactivator mdpA (Emericella nidulans (strain FGSC A4 / ATCC 38163 / CBS 112.46 / NRRL 194 / M139) (Aspergillus nidulans)).